Reading from the N-terminus, the 97-residue chain is Large ribosomal subunit protein uL30m (97 aa).

It belongs to the universal ribosomal protein uL30 family. Component of the mitochondrial large ribosomal subunit (mt-LSU). Mature yeast 74S mitochondrial ribosomes consist of a small (37S) and a large (54S) subunit. The 37S small subunit contains a 15S ribosomal RNA (15S mt-rRNA) and at least 32 different proteins. The 54S large subunit contains a 21S rRNA (21S mt-rRNA) and at least 45 different proteins.

Its subcellular location is the mitochondrion. In terms of biological role, component of the mitochondrial ribosome (mitoribosome), a dedicated translation machinery responsible for the synthesis of mitochondrial genome-encoded proteins, including at least some of the essential transmembrane subunits of the mitochondrial respiratory chain. The mitoribosomes are attached to the mitochondrial inner membrane and translation products are cotranslationally integrated into the membrane. The polypeptide is Large ribosomal subunit protein uL30m (mrpl33) (Schizosaccharomyces pombe (strain 972 / ATCC 24843) (Fission yeast)).